Consider the following 305-residue polypeptide: tRNA pseudouridine synthase B (305 aa).

Asp-48 acts as the Nucleophile in catalysis.

Belongs to the pseudouridine synthase TruB family. Type 1 subfamily.

It catalyses the reaction uridine(55) in tRNA = pseudouridine(55) in tRNA. Functionally, responsible for synthesis of pseudouridine from uracil-55 in the psi GC loop of transfer RNAs. This Stutzerimonas stutzeri (strain A1501) (Pseudomonas stutzeri) protein is tRNA pseudouridine synthase B.